Consider the following 719-residue polypeptide: MKFHLKRYVIVTSILLSFFLLFRRQFLPLTQRQPNPINNELVSFDLIKQRNKFENPIYAKWKLSSSSPLETDLTTRCNDYFQQLLTQENFQINYHDSGYKTEPFVYKRKKWLKERIRSLRKQYKFDKNKDKYDFDQIAKQEFSIVSKNQSIHELNIYQHFSHTRIFGKCFATNNNNNNNNGVINMENPQSNQLCKSFVQKLYPWMSGNLPIFERNKERSPPQLDDSTDCIIEQIYKNSKGKGKGIIIPLMTQDKSNNQIQNIGRLIKVLRGLNNTLPIEITFMELITPEAKQQLYDIATSDSQMYPTKQDIAFVDLSPTTTNQVKGSISDSSIITLSSIFTSFEEFIILNQHIIPLIELTKFFNNERYKLHGTYFFKSPSKLKYRTTKFNIGFHEIASFIKNQLIPNKFDKHYFNLYQKGSENGDEVTIDRFFNYQFNNLIDSSLIIFNKSKTLSGLLISGNFEFLYHDDLFNIRINNTPTKTKMDYLWLGQYISGINEQIIFNFNYAIMPGILTPSQNLPKDSIECLEICSSSWGQLSDIDDISLLYITSHQLQNWLNHQKFFESLLKDKYEFKFNELVDNFLITNTNTNTNTNTNTNGNTNDKDSTKLTMGRIDLSIFEKIKTQPLKIETIIRPPTLIEPINVLGYNEPDQAWVHQDDFDRIGQNGQGQGQGQGHPFYCVYSSIGDPLKEGIRGLSINVEQSLQKKYKKLIEIWLQD.

Residues 1-4 (MKFH) lie on the Cytoplasmic side of the membrane. Residues 5-22 (LKRYVIVTSILLSFFLLF) form a helical membrane-spanning segment. Topologically, residues 23–719 (RRQFLPLTQR…KKLIEIWLQD (697 aa)) are lumenal. N-linked (GlcNAc...) asparagine glycosylation is found at Asn-148, Asn-273, and Asn-449.

This sequence belongs to the MNN1/MNT family.

It is found in the golgi apparatus membrane. It functions in the pathway protein modification; protein glycosylation. In terms of biological role, responsible for addition of the terminal mannose residues to the outer chain of core N-linked polysaccharides and to O-linked mannotriose. Implicated in late Golgi modifications. This Candida albicans (strain SC5314 / ATCC MYA-2876) (Yeast) protein is Putative alpha-1,3-mannosyltransferase MNT4 (MNT4).